The primary structure comprises 543 residues: uncharacterized protein (543 aa).

Residues 1 to 59 (MLKKNDIVEVEIVDLTHEGAGVAKVDGLVFFVENALPSEKILMRVLKVNKKIGFGKVEK) enclose the TRAM domain. Gln-283, Tyr-312, Glu-333, and Asp-381 together coordinate S-adenosyl-L-methionine. Cys-408 serves as the catalytic Nucleophile.

Belongs to the class I-like SAM-binding methyltransferase superfamily. RNA M5U methyltransferase family.

This is an uncharacterized protein from Streptococcus pneumoniae (strain ATCC BAA-255 / R6).